The following is a 95-amino-acid chain: Large ribosomal subunit protein uL23 (95 aa).

Belongs to the universal ribosomal protein uL23 family. Part of the 50S ribosomal subunit. Contacts protein L29, and trigger factor when it is bound to the ribosome.

One of the early assembly proteins it binds 23S rRNA. One of the proteins that surrounds the polypeptide exit tunnel on the outside of the ribosome. Forms the main docking site for trigger factor binding to the ribosome. The chain is Large ribosomal subunit protein uL23 from Geobacillus kaustophilus (strain HTA426).